Consider the following 217-residue polypeptide: Adenylate kinase (217 aa).

ATP is bound at residue 10–15; it reads GIGKGT. The interval 30 to 59 is NMP; the sequence is ATGDIFRKNFKENTELGILIKKIIAQGLLV. Residues Thr31, Arg36, 57–59, 85–88, and Gln92 contribute to the AMP site; these read LLV and GFPR. An LID region spans residues 126-163; the sequence is GRRICPECGKVYHIENIPPKTPGICDKDQKTLIQREDD. An ATP-binding site is contributed by Arg127. Positions 130 and 133 each coordinate Zn(2+). 136–137 contributes to the ATP binding site; it reads VY. Zn(2+) contacts are provided by Cys150 and Asp153. AMP is bound by residues Arg160 and Arg171. Gln199 contacts ATP.

It belongs to the adenylate kinase family. Monomer.

The protein localises to the cytoplasm. It catalyses the reaction AMP + ATP = 2 ADP. It participates in purine metabolism; AMP biosynthesis via salvage pathway; AMP from ADP: step 1/1. Its function is as follows. Catalyzes the reversible transfer of the terminal phosphate group between ATP and AMP. Plays an important role in cellular energy homeostasis and in adenine nucleotide metabolism. The sequence is that of Adenylate kinase from Onion yellows phytoplasma (strain OY-M).